The following is an 836-amino-acid chain: Ethylene receptor 3 (836 aa).

A run of 3 helical transmembrane segments spans residues 137–157 (LIAAAYFSIPLEILYFVAGLR), 166–186 (LVQFGAFIVLCGLTHLLTAFT), and 204–224 (LTALVSFLTAITLLTLIPQLL). Positions 176 and 180 each coordinate Cu cation. One can recognise a GAF domain in the interval 269–413 (DRHTVLYTTL…VVAGQVAVAL (145 aa)). A coiled-coil region spans residues 416–452 (ATLLEESRAMRDRLAEQNRELLQARRDALMANEARQA). One can recognise a Histidine kinase domain in the interval 457–691 (MSQGMRRPIH…LVLRFQLQSP (235 aa)). Residues 718–834 (LLIDDDDDIN…LKDELARILQ (117 aa)) form the Response regulatory domain.

The protein belongs to the ethylene receptor family. Cu cation is required as a cofactor.

It is found in the endoplasmic reticulum membrane. The enzyme catalyses ATP + protein L-histidine = ADP + protein N-phospho-L-histidine.. In terms of biological role, ethylene receptor related to bacterial two-component regulators. Acts as a negative regulator of ethylene signaling. May delay the transition from the vegetative stage to the floral stage by up-regulating GI (GIGANTEA) and RCN1 and cause starch accumulation in stems by down-regulating the alpha-amylase AMY3D. In Oryza sativa subsp. japonica (Rice), this protein is Ethylene receptor 3 (ETR3).